The chain runs to 802 residues: Endoplasmin (802 aa).

The N-terminal stretch at 1–21 (MRALWVLGLCCVLLTFGSARA) is a signal peptide. The short motif at 42–44 (SRT) is the SRT pseudosubstrate motif element. Residue Asn62 is glycosylated (N-linked (GlcNAc...) asparagine). Residue Ser64 is modified to Phosphoserine. Asn107 carries N-linked (GlcNAc...) asparagine glycosylation. ATP contacts are provided by Asn107, Asp149, and Asn162. Lys168 is subject to N6-(2-hydroxyisobutyryl)lysine. Ser172 carries the post-translational modification Phosphoserine. Phe199 lines the ATP pocket. Residue Asn217 is glycosylated (N-linked (GlcNAc...) asparagine). Residues 288–323 (TVEEPAEEEEAAKEEKEEADDEAAVEEEEEEKKPKT) are disordered. The span at 289-317 (VEEPAEEEEAAKEEKEEADDEAAVEEEEE) shows a compositional bias: acidic residues. The residue at position 403 (Ser403) is a Phosphoserine. At Lys404 the chain carries N6-succinyllysine. Residue Asn445 is glycosylated (N-linked (GlcNAc...) asparagine). Ser447 bears the Phosphoserine mark. Residue Lys479 is modified to N6-acetyllysine. N-linked (GlcNAc...) asparagine glycosylation is found at Asn481 and Asn502. The residue at position 633 (Lys633) is an N6-succinyllysine. The interval 750 to 802 (DPDAKVEEEPEEEPEDTTEDTEQDEEEEMDAGTDEEEQEQEPEKKSTAEKDEL) is disordered. Residues 757 to 789 (EEPEEEPEDTTEDTEQDEEEEMDAGTDEEEQEQ) are compositionally biased toward acidic residues. Thr782 carries the phosphothreonine modification. Over residues 790 to 802 (EPEKKSTAEKDEL) the composition is skewed to basic and acidic residues. Positions 799-802 (KDEL) match the Prevents secretion from ER motif.

Belongs to the heat shock protein 90 family. In terms of assembly, homodimer; disulfide-linked. Component of an EIF2 complex at least composed of CELF1/CUGBP1, CALR, CALR3, EIF2S1, EIF2S2, HSP90B1 and HSPA5. Part of a large chaperone multiprotein complex comprising DNAJB11, HSP90B1, HSPA5, HYOU, PDIA2, PDIA4, PDIA6, PPIB, SDF2L1, UGGT1 and very small amounts of ERP29, but not, or at very low levels, CALR nor CANX. Interacts with AIMP1; regulates its retention in the endoplasmic reticulum. Hyperglycosylated form interacts with OS9; promoting its degradation by the endoplasmic reticulum associated degradation (ERAD). Interacts with CNPY3. This interaction is disrupted in the presence of ATP. Interacts with TLR4 and TLR9, but not with TLR3. Interacts with MZB1 in a calcium-dependent manner. Interacts with METTL23. Interacts with IL1B; the interaction facilitates cargo translocation into the ERGIC. Interacts with EIF2AK3. In terms of processing, phosphorylated by CK2. Post-translationally, N-glycosylated cotranslationally at Asn-217 by STT3A-containing OST-A complex: this glycosylation is constitutive. In response to various stress, 5 additional facultative sites (Asn-62, Asn-107, Asn-445, Asn-481 and Asn-502) can be glycosylated post-translationally by STT3B-containing OST-B complex, leading to a hyperglycosylated form that is degraded by the ER-associated degradation (ERAD) pathway. In normal conditions, the OST-A complex together with CCDC134 prevent glycosylation at facultative sites during protein folding, thereby preventing hyperglycosylation. Mechanistically, nascent HSP90B1 is tethered during translation to a specialized CCDC134-containing translocon that forms a microenvironment for its folding, in which STT3A associates with the SRT pseudosubstrate motif, and prevents access to facultative glycosylation sites until folding is completed, rendering its facultative sites inaccessible to the OST-B complex.

It is found in the endoplasmic reticulum lumen. The protein resides in the sarcoplasmic reticulum lumen. Its subcellular location is the melanosome. It catalyses the reaction ATP + H2O = ADP + phosphate + H(+). In terms of biological role, ATP-dependent chaperone involved in the processing of proteins in the endoplasmic reticulum, regulating their transport. Together with MESD, acts as a modulator of the Wnt pathway by promoting the folding of LRP6, a coreceptor of the canonical Wnt pathway. When associated with CNPY3, required for proper folding of Toll-like receptors. Promotes folding and trafficking of TLR4 to the cell surface. May participate in the unfolding of cytosolic leaderless cargos (lacking the secretion signal sequence) such as the interleukin 1/IL-1 to facilitate their translocation into the ERGIC (endoplasmic reticulum-Golgi intermediate compartment) and secretion; the translocation process is mediated by the cargo receptor TMED10. The chain is Endoplasmin (HSP90B1) from Oryctolagus cuniculus (Rabbit).